The primary structure comprises 358 residues: Ferredoxin--NADP reductase (358 aa).

Residues Asp-38, Gln-46, Tyr-51, Val-91, Phe-126, Asp-301, and Thr-341 each coordinate FAD.

This sequence belongs to the ferredoxin--NADP reductase type 2 family. Homodimer. The cofactor is FAD.

The catalysed reaction is 2 reduced [2Fe-2S]-[ferredoxin] + NADP(+) + H(+) = 2 oxidized [2Fe-2S]-[ferredoxin] + NADPH. The chain is Ferredoxin--NADP reductase from Paracidovorax citrulli (strain AAC00-1) (Acidovorax citrulli).